We begin with the raw amino-acid sequence, 177 residues long: Large ribosomal subunit protein uL5c (177 aa).

This sequence belongs to the universal ribosomal protein uL5 family. In terms of assembly, part of the 50S ribosomal subunit; contacts the 5S rRNA.

It is found in the plastid. The protein resides in the chloroplast. Binds 5S rRNA, forms part of the central protuberance of the 50S subunit. The sequence is that of Large ribosomal subunit protein uL5c (rpl5) from Cyanidioschyzon merolae (strain NIES-3377 / 10D) (Unicellular red alga).